Reading from the N-terminus, the 420-residue chain is MASYTPSSSRPHTPLGLSPRGSYTNLASAAYDASSPGGHGAKDEKERLRAEREVQEALLKAQDGVEKAKKEEVCMPASTTVLPILSYCVASIMMTVVNKFVVSGRQFTMTFLLLAIQSFVCVACVWLAKRIGVINFRDWDMNDAKAWFPVSSLLVAVIYTGSKSLQFLSIPVYTIFKNLTIILIAYGEVIWFGGHVTPLTLCSFFLMVGSSVIAAWADISTTLSKLSAGVAVVDPISGADVPLSSISVMDTMNVGYLWMFINCLASAGYVLFMRKRIKVTGFKDWDSMFYNNLLSIPVLFVFSLIIEDWGAASFSRNFPEEGRAFLLSAIAFSGAAAVFISYSTAWCVRICGATTYSLVGALNKLPVAASGILFFGDPVNFGNVSAILVGGVSGIVYAVAKTNQAKVEKSKQARGGESKA.

Residues M1 to P11 show a composition bias toward polar residues. The interval M1–G21 is disordered. The Cytoplasmic segment spans residues M1–P76. The helical transmembrane segment at A77–V97 threads the bilayer. The Lumenal segment spans residues N98 to Q106. Residues F107 to L127 form a helical membrane-spanning segment. The Cytoplasmic portion of the chain corresponds to A128–K145. A helical transmembrane segment spans residues A146 to L168. The Lumenal portion of the chain corresponds to S169–P171. The helical transmembrane segment at V172–G194 threads the bilayer. Residues H195–T200 are Cytoplasmic-facing. A helical membrane pass occupies residues L201–L223. At S224–T251 the chain is on the lumenal side. Residues M252–F272 form a helical membrane-spanning segment. Over M273–L293 the chain is Cytoplasmic. Residues L294 to F314 traverse the membrane as a helical segment. At S315–R323 the chain is on the lumenal side. A helical membrane pass occupies residues A324–T344. Residues A345 to T355 lie on the Cytoplasmic side of the membrane. The chain crosses the membrane as a helical span at residues Y356 to G376. Residues D377–P378 lie on the Lumenal side of the membrane. The helical transmembrane segment at V379 to V399 threads the bilayer. The Cytoplasmic portion of the chain corresponds to A400–A420.

Belongs to the TPT transporter family. SLC35D subfamily. In terms of assembly, homooligomer.

It localises to the golgi apparatus membrane. The protein resides in the cytoplasmic vesicle membrane. Its subcellular location is the endoplasmic reticulum membrane. Functionally, involved in the import of GDP-mannose from the cytoplasm into the Golgi lumen. This Cryptococcus neoformans var. neoformans serotype D (strain B-3501A) (Filobasidiella neoformans) protein is GDP-mannose transporter 2 (GMT2).